Here is a 341-residue protein sequence, read N- to C-terminus: GDT1-like protein 1, chloroplastic (341 aa).

Positions 1-13 (MASVASSTVFASS) are enriched in low complexity. Disordered stretches follow at residues 1 to 41 (MASV…GRSV) and 54 to 76 (VVTR…GGGR). Residues 1 to 57 (MASVASSTVFASSLPHHRATTRAPPTPPRIPRRARLPGRSVVSCLPKRGSEKLVVTR) constitute a chloroplast transit peptide. 7 consecutive transmembrane segments (helical) span residues 79–99 (PSLD…VLML), 117–137 (VVGD…LIFF), 158–178 (AIIF…SVVL), 203–223 (FLAA…AASG), 246–266 (GAGI…VFIA), 286–306 (LGVI…AVLG), and 318–338 (IVAY…LVEI).

It belongs to the GDT1 family.

It localises to the plastid. It is found in the chloroplast membrane. The sequence is that of GDT1-like protein 1, chloroplastic from Oryza sativa subsp. japonica (Rice).